The sequence spans 491 residues: Bifunctional protein HldE (491 aa).

Positions 1-330 (MDRKMVESLF…AAVSLEHRDS (330 aa)) are ribokinase. An ATP-binding site is contributed by 205 to 208 (NRKE). Asp275 is a catalytic residue. The tract at residues 356-491 (FTNGCFDLLH…KVLERYTDEQ (136 aa)) is cytidylyltransferase.

This sequence in the N-terminal section; belongs to the carbohydrate kinase PfkB family. In the C-terminal section; belongs to the cytidylyltransferase family. As to quaternary structure, homodimer.

The catalysed reaction is D-glycero-beta-D-manno-heptose 7-phosphate + ATP = D-glycero-beta-D-manno-heptose 1,7-bisphosphate + ADP + H(+). The enzyme catalyses D-glycero-beta-D-manno-heptose 1-phosphate + ATP + H(+) = ADP-D-glycero-beta-D-manno-heptose + diphosphate. Its pathway is nucleotide-sugar biosynthesis; ADP-L-glycero-beta-D-manno-heptose biosynthesis; ADP-L-glycero-beta-D-manno-heptose from D-glycero-beta-D-manno-heptose 7-phosphate: step 1/4. The protein operates within nucleotide-sugar biosynthesis; ADP-L-glycero-beta-D-manno-heptose biosynthesis; ADP-L-glycero-beta-D-manno-heptose from D-glycero-beta-D-manno-heptose 7-phosphate: step 3/4. In terms of biological role, catalyzes the phosphorylation of D-glycero-D-manno-heptose 7-phosphate at the C-1 position to selectively form D-glycero-beta-D-manno-heptose-1,7-bisphosphate. Functionally, catalyzes the ADP transfer from ATP to D-glycero-beta-D-manno-heptose 1-phosphate, yielding ADP-D-glycero-beta-D-manno-heptose. The chain is Bifunctional protein HldE from Trichlorobacter lovleyi (strain ATCC BAA-1151 / DSM 17278 / SZ) (Geobacter lovleyi).